The following is a 216-amino-acid chain: UPF0301 protein Nham_3550 (216 aa).

Positions 1 to 10 (MSAARKRPGT) are enriched in basic residues. The interval 1-25 (MSAARKRPGTGRRQTDDADTGAPDQ) is disordered.

Belongs to the UPF0301 (AlgH) family.

The sequence is that of UPF0301 protein Nham_3550 from Nitrobacter hamburgensis (strain DSM 10229 / NCIMB 13809 / X14).